The primary structure comprises 440 residues: tRNA (guanine(37)-N(1))-methyltransferase (440 aa).

Residues His-217, 255–256, 283–284, and Asn-315 contribute to the S-adenosyl-L-methionine site; these read DL and DG.

The protein belongs to the class I-like SAM-binding methyltransferase superfamily. TRM5/TYW2 family. Monomer.

It localises to the mitochondrion matrix. The protein localises to the nucleus. Its subcellular location is the cytoplasm. It catalyses the reaction guanosine(37) in tRNA + S-adenosyl-L-methionine = N(1)-methylguanosine(37) in tRNA + S-adenosyl-L-homocysteine + H(+). Functionally, specifically methylates the N1 position of guanosine-37 in various cytoplasmic and mitochondrial tRNAs. Methylation is not dependent on the nature of the nucleoside 5' of the target nucleoside. This is the first step in the biosynthesis of wybutosine (yW), a modified base adjacent to the anticodon of tRNAs and required for accurate decoding. The chain is tRNA (guanine(37)-N(1))-methyltransferase from Drosophila pseudoobscura pseudoobscura (Fruit fly).